The sequence spans 301 residues: Homoserine kinase (301 aa).

86–96 (PLARGLGSSAT) is a binding site for ATP.

It belongs to the GHMP kinase family. Homoserine kinase subfamily.

It localises to the cytoplasm. It catalyses the reaction L-homoserine + ATP = O-phospho-L-homoserine + ADP + H(+). Its pathway is amino-acid biosynthesis; L-threonine biosynthesis; L-threonine from L-aspartate: step 4/5. Functionally, catalyzes the ATP-dependent phosphorylation of L-homoserine to L-homoserine phosphate. This is Homoserine kinase from Thermosynechococcus vestitus (strain NIES-2133 / IAM M-273 / BP-1).